The chain runs to 253 residues: MECPIIALSVGFSNNSQPYVEAIIKAGGCPIVIYPGLQRNSIPPNIDGIILAGGESVHPNRYGEDFDPNAPKSVDVIRDSTEWGMIDFALKKKIPILGICRGCQVLNVYFGGSLYQNVSSCGFRDIHRPSKPRHYLAHKVMAKPGKLKNILGSNVIDVNSIHDQGIKTLGMGLQSTVISDDGLCEGIESKDGLIIGVQWHPEAIIDKQPHSLKLFQYFINRSKWHMKQSNIFSNVPHESSFYRNSIISIPIAP.

The 224-residue stretch at 5-228 (IIALSVGFSN…INRSKWHMKQ (224 aa)) folds into the Glutamine amidotransferase type-1 domain. C100 acts as the Nucleophile in catalysis. Residues H200 and E202 contribute to the active site.

The protein localises to the cytoplasm. It localises to the nucleus. This Schizosaccharomyces pombe (strain 972 / ATCC 24843) (Fission yeast) protein is Putative glutamine amidotransferase PB2B2.05.